The following is a 123-amino-acid chain: Large ribosomal subunit protein uL29 (123 aa).

At Lys-19 the chain carries N6-acetyllysine. Lys-25 participates in a covalent cross-link: Glycyl lysine isopeptide (Lys-Gly) (interchain with G-Cter in SUMO2). Phosphoserine is present on Ser-29. An N6-acetyllysine modification is found at Lys-43.

The protein belongs to the universal ribosomal protein uL29 family. In terms of assembly, component of the large ribosomal subunit.

The protein localises to the cytoplasm. Component of the large ribosomal subunit. The ribosome is a large ribonucleoprotein complex responsible for the synthesis of proteins in the cell. The sequence is that of Large ribosomal subunit protein uL29 (RPL35) from Sus scrofa (Pig).